Reading from the N-terminus, the 371-residue chain is UPF0284 protein tll2306 (371 aa).

This sequence belongs to the UPF0284 family.

The protein is UPF0284 protein tll2306 of Thermosynechococcus vestitus (strain NIES-2133 / IAM M-273 / BP-1).